The following is a 296-amino-acid chain: Formamidopyrimidine-DNA glycosylase (296 aa).

Pro2 functions as the Schiff-base intermediate with DNA in the catalytic mechanism. The active-site Proton donor is the Glu3. The active-site Proton donor; for beta-elimination activity is the Lys58. DNA contacts are provided by His106, Arg125, and Lys167. The FPG-type zinc-finger motif lies at 258 to 294 (RVYDRVGLPCSRPGCAGAITRIVQANRSTFFCATCQP). The active-site Proton donor; for delta-elimination activity is Arg284.

This sequence belongs to the FPG family. In terms of assembly, monomer. Zn(2+) serves as cofactor.

It carries out the reaction Hydrolysis of DNA containing ring-opened 7-methylguanine residues, releasing 2,6-diamino-4-hydroxy-5-(N-methyl)formamidopyrimidine.. The catalysed reaction is 2'-deoxyribonucleotide-(2'-deoxyribose 5'-phosphate)-2'-deoxyribonucleotide-DNA = a 3'-end 2'-deoxyribonucleotide-(2,3-dehydro-2,3-deoxyribose 5'-phosphate)-DNA + a 5'-end 5'-phospho-2'-deoxyribonucleoside-DNA + H(+). Involved in base excision repair of DNA damaged by oxidation or by mutagenic agents. Acts as a DNA glycosylase that recognizes and removes damaged bases. Has a preference for oxidized purines, such as 7,8-dihydro-8-oxoguanine (8-oxoG). Has AP (apurinic/apyrimidinic) lyase activity and introduces nicks in the DNA strand. Cleaves the DNA backbone by beta-delta elimination to generate a single-strand break at the site of the removed base with both 3'- and 5'-phosphates. This is Formamidopyrimidine-DNA glycosylase from Methylobacterium radiotolerans (strain ATCC 27329 / DSM 1819 / JCM 2831 / NBRC 15690 / NCIMB 10815 / 0-1).